A 325-amino-acid chain; its full sequence is Succinylglutamate desuccinylase (325 aa).

Residues His51, Glu54, and His148 each coordinate Zn(2+). Residue Glu211 is part of the active site.

This sequence belongs to the AspA/AstE family. Succinylglutamate desuccinylase subfamily. Zn(2+) is required as a cofactor.

It catalyses the reaction N-succinyl-L-glutamate + H2O = L-glutamate + succinate. It functions in the pathway amino-acid degradation; L-arginine degradation via AST pathway; L-glutamate and succinate from L-arginine: step 5/5. In terms of biological role, transforms N(2)-succinylglutamate into succinate and glutamate. This Photorhabdus laumondii subsp. laumondii (strain DSM 15139 / CIP 105565 / TT01) (Photorhabdus luminescens subsp. laumondii) protein is Succinylglutamate desuccinylase.